Consider the following 274-residue polypeptide: Large ribosomal subunit protein uL2 (274 aa).

The disordered stretch occupies residues 220–265 (VRGAAMNPRDHPHGGGEGRAPRGMSTPKTKWGKPARGVKTRHNPRF). Over residues 227 to 239 (PRDHPHGGGEGRA) the composition is skewed to basic and acidic residues. Basic residues predominate over residues 249–262 (KWGKPARGVKTRHN).

This sequence belongs to the universal ribosomal protein uL2 family. Part of the 50S ribosomal subunit. Forms a bridge to the 30S subunit in the 70S ribosome.

One of the primary rRNA binding proteins. Required for association of the 30S and 50S subunits to form the 70S ribosome, for tRNA binding and peptide bond formation. It has been suggested to have peptidyltransferase activity; this is somewhat controversial. Makes several contacts with the 16S rRNA in the 70S ribosome. The sequence is that of Large ribosomal subunit protein uL2 from Chloroflexus aurantiacus (strain ATCC 29364 / DSM 637 / Y-400-fl).